Consider the following 143-residue polypeptide: Large ribosomal subunit protein uL11 (143 aa).

It belongs to the universal ribosomal protein uL11 family. Part of the ribosomal stalk of the 50S ribosomal subunit. Interacts with L10 and the large rRNA to form the base of the stalk. L10 forms an elongated spine to which L12 dimers bind in a sequential fashion forming a multimeric L10(L12)X complex. In terms of processing, one or more lysine residues are methylated.

Forms part of the ribosomal stalk which helps the ribosome interact with GTP-bound translation factors. This chain is Large ribosomal subunit protein uL11, found in Azotobacter vinelandii (strain DJ / ATCC BAA-1303).